The primary structure comprises 114 residues: UPF0102 protein CD630_12710 (114 aa).

It belongs to the UPF0102 family.

The protein is UPF0102 protein CD630_12710 of Clostridioides difficile (strain 630) (Peptoclostridium difficile).